A 624-amino-acid polypeptide reads, in one-letter code: Histone-lysine N-methyltransferase, H3 lysine-9 specific SUVH4 (624 aa).

2 disordered regions span residues 1 to 25 (MAGK…VQKV) and 54 to 86 (DDTE…KGKQ). A YDG domain is found at 149–302 (GDLPGIDVGH…FTVYKYRLKR (154 aa)). Residues 381-443 (TGCNCRGSCT…KCVNRTSQKR (63 aa)) form the Pre-SET domain. Zn(2+) contacts are provided by C383, C385, C389, C395, C397, C425, C429, C431, and C435. The SET domain occupies 446-594 (FNLEVFRSAK…PMQELTYDYG (149 aa)). S-adenosyl-L-methionine is bound by residues 456–458 (KGW), Y493, R548, and 551–552 (NH). 4 residues coordinate Zn(2+): C554, C612, C614, and C619. The Post-SET domain maps to 608–624 (KQLACYCGALNCRKRLY).

This sequence belongs to the class V-like SAM-binding methyltransferase superfamily. Histone-lysine methyltransferase family. Suvar3-9 subfamily. In terms of assembly, interacts with H3 histone. As to expression, expressed in leaves stems and flowers.

It localises to the nucleus. It is found in the chromosome. The protein resides in the centromere. It catalyses the reaction N(6)-methyl-L-lysyl(9)-[histone H3] + S-adenosyl-L-methionine = N(6),N(6)-dimethyl-L-lysyl(9)-[histone H3] + S-adenosyl-L-homocysteine + H(+). It carries out the reaction L-lysyl(9)-[histone H3] + S-adenosyl-L-methionine = N(6)-methyl-L-lysyl(9)-[histone H3] + S-adenosyl-L-homocysteine + H(+). Functionally, histone methyltransferase. Methylates 'Lys-9' of histone H3. H3 'Lys-9' methylation represents a specific tag for epigenetic transcriptional repression. The silencing mechanism via DNA CpNpG methylation requires the targeting of chromomethylase CMT3 to methylated histones, probably through an interaction with an HP1-like adapter. By its function, KYP is directly required for the maintenance of the DNA CpNpG and asymmetric methylation. Involved in the silencing of transposable elements. The polypeptide is Histone-lysine N-methyltransferase, H3 lysine-9 specific SUVH4 (SUVH4) (Arabidopsis thaliana (Mouse-ear cress)).